The primary structure comprises 338 residues: Lipopolysaccharide 1,2-glucosyltransferase (338 aa).

UDP-binding positions include 33-38 (GVDANY) and 130-131 (DA). Residues aspartate 130 and aspartate 132 each contribute to the Mg(2+) site. 2 short sequence motifs (DXD) span residues 130–132 (DAD) and 215–217 (DQD). Histidine 264 provides a ligand contact to Mg(2+). Residue 264 to 270 (HYTGATK) coordinates UDP.

This sequence belongs to the glycosyltransferase 8 family. Mg(2+) is required as a cofactor.

It localises to the cell inner membrane. The catalysed reaction is UDP-glucose + [lipopolysaccharide] = UDP + D-glucosyl-[lipopolysaccharide].. The enzyme catalyses alpha-D-Glc-(1-&gt;3)-[alpha-D-Gal-(1-&gt;6)]-alpha-D-Glc-(1-&gt;3)-[L-alpha-D-Hep-(1-&gt;7)]-4-O-PO3(2-)-L-alpha-D-Hep-(1-&gt;3)-4-O-PO3(2-)-L-alpha-D-Hep-(1-&gt;5)-[alpha-Kdo-(2-&gt;4)]-alpha-Kdo-(2-&gt;6)-lipid A + UDP-alpha-D-glucose = alpha-D-Glc-(1-&gt;2)-alpha-D-Glc-(1-&gt;3)-[alpha-D-Gal-(1-&gt;6)]-alpha-D-Glc-(1-&gt;3)-[L-alpha-D-Hep-(1-&gt;7)]-4-O-PO3(2-)-L-alpha-D-Hep-(1-&gt;3)-4-O-PO3(2-)-L-alpha-D-Hep-(1-&gt;5)-[alpha-Kdo-(2-&gt;4)]-alpha-Kdo-(2-&gt;6)-lipid A + UDP + H(+). It participates in bacterial outer membrane biogenesis; LPS core biosynthesis. In terms of biological role, glucosyltransferase involved in the biosynthesis of the core oligosaccharide region of lipopolysaccharide (LPS). Catalyzes the addition of a glucose (glucose III) to the outer-core glucose II. The protein is Lipopolysaccharide 1,2-glucosyltransferase of Escherichia coli (strain K12).